The sequence spans 353 residues: Chorismate synthase (353 aa).

2 residues coordinate NADP(+): Arg48 and Arg54. Residues 125–127, 238–239, Gly278, 293–297, and Arg319 each bind FMN; these read RSS, NA, and KPTSS.

Belongs to the chorismate synthase family. In terms of assembly, homotetramer. FMNH2 serves as cofactor.

It catalyses the reaction 5-O-(1-carboxyvinyl)-3-phosphoshikimate = chorismate + phosphate. It functions in the pathway metabolic intermediate biosynthesis; chorismate biosynthesis; chorismate from D-erythrose 4-phosphate and phosphoenolpyruvate: step 7/7. Its function is as follows. Catalyzes the anti-1,4-elimination of the C-3 phosphate and the C-6 proR hydrogen from 5-enolpyruvylshikimate-3-phosphate (EPSP) to yield chorismate, which is the branch point compound that serves as the starting substrate for the three terminal pathways of aromatic amino acid biosynthesis. This reaction introduces a second double bond into the aromatic ring system. This is Chorismate synthase from Bordetella parapertussis (strain 12822 / ATCC BAA-587 / NCTC 13253).